We begin with the raw amino-acid sequence, 77 residues long: MKLIILTGLVLFAIVSLIEAEEESGRACILLYGECTKASGSCCSNLICDCYRKLKKGVQIARQCFCLEKDVVYKKHI.

Positions 1-20 are cleaved as a signal peptide; that stretch reads MKLIILTGLVLFAIVSLIEA. Positions 21 to 26 are excised as a propeptide; sequence EEESGR.

This sequence belongs to the neurotoxin 19 (CSTX) family. 10 (U11-Lctx) subfamily. In terms of processing, contains 4 disulfide bonds. As to expression, expressed by the venom gland.

It is found in the secreted. The protein is U11-lycotoxin-Ls1a of Lycosa singoriensis (Wolf spider).